Here is a 353-residue protein sequence, read N- to C-terminus: WD repeat-containing protein 55 (353 aa).

7 WD repeats span residues 4 to 43, 49 to 88, 92 to 130, 133 to 172, 175 to 214, 218 to 257, and 260 to 299; these read DLGANAFGIDFHPSTNLVAAGLIDGHLHLYRYDSDSSLVR, AHKESCRAVRFIDDGQRIVTASADCSILATDVETGAQVAH, AHEDAVNTLINVTETTIASGDDKGCVKIWDTRQRSCSHE, AHEDYISGMTFASDSMKLVVTSGDGTLSVCNLRTSKVQSQ, FSEDELLSVVIMKNGRKVICGTQNGTLLLYSWGFFKDCSD, DLAPNSVDALLKLDEDRLITGCDNGIISLVGILPNRIIQP, and SHDYPIEDLALSHDKKFLGSTAHDSMLKLWNLEEILEGSN. Residues 300 to 353 form a disordered region; that stretch reads VNSGNASGAAEDSDSDNDGMDLDNDPSKSSKGSKRKTKSKANTLNATNNFFADL. Residues 310–323 show a composition bias toward acidic residues; sequence EDSDSDNDGMDLDN. Residues 339-353 are compositionally biased toward low complexity; the sequence is KANTLNATNNFFADL.

The protein belongs to the WD repeat WDR55 family. Interacts with DDB1A. As to expression, highly expressed in roots. Expressed in cotyledons, leaves, buds and flowers.

It is found in the nucleus. The protein resides in the cytoplasm. Its function is as follows. Required for male and female gametogenesis, seed development, and embryo and endosperm development at early stages. Involved in the establishment of bilateral symmetry in the transition from the globular to the heart embryo stage. May act in the frame of a CRL4 complex. Required for proper vegetative growth and organization of the adult plant body. May play a role in hormonal control of plant development. This Arabidopsis thaliana (Mouse-ear cress) protein is WD repeat-containing protein 55.